The primary structure comprises 488 residues: Germacrene A acid 8-beta-hydroxylase (488 aa).

Residues 2–22 traverse the membrane as a helical; Signal-anchor for type II membrane protein segment; sequence ELFTIFSIVVSSLILFTFWSL. A glycan (N-linked (GlcNAc...) asparagine) is linked at Asn-407. Cys-429 contributes to the heme binding site.

This sequence belongs to the cytochrome P450 family. Heme serves as cofactor. In terms of tissue distribution, expressed in leaf primordia.

The protein localises to the membrane. It carries out the reaction germacra-1(10),4,11(13)-trien-12-oate + reduced [NADPH--hemoprotein reductase] + O2 = 8beta-hydroxygermacra-1(10),4,11(13)-trien-12-oate + oxidized [NADPH--hemoprotein reductase] + H2O + H(+). Its pathway is secondary metabolite biosynthesis; terpenoid biosynthesis. Its function is as follows. Involved in the biosynthesis of germacrene-derived sesquiterpene lactones. Hydroxylates germacrene A acid to 8-beta-hydroxy-germacrene A acid. Unlike 6-alpha-hydroxy-germacrene A acid, this compound cannot undergo spontaneous lactonization. This is Germacrene A acid 8-beta-hydroxylase from Helianthus annuus (Common sunflower).